Consider the following 374-residue polypeptide: UDP-N-acetylglucosamine--N-acetylmuramyl-(pentapeptide) pyrophosphoryl-undecaprenol N-acetylglucosamine transferase (374 aa).

UDP-N-acetyl-alpha-D-glucosamine is bound by residues 10-12 (TGG), asparagine 124, arginine 166, serine 196, and glutamine 294.

It belongs to the glycosyltransferase 28 family. MurG subfamily.

It is found in the cell membrane. It catalyses the reaction di-trans,octa-cis-undecaprenyl diphospho-N-acetyl-alpha-D-muramoyl-L-alanyl-D-glutamyl-meso-2,6-diaminopimeloyl-D-alanyl-D-alanine + UDP-N-acetyl-alpha-D-glucosamine = di-trans,octa-cis-undecaprenyl diphospho-[N-acetyl-alpha-D-glucosaminyl-(1-&gt;4)]-N-acetyl-alpha-D-muramoyl-L-alanyl-D-glutamyl-meso-2,6-diaminopimeloyl-D-alanyl-D-alanine + UDP + H(+). The protein operates within cell wall biogenesis; peptidoglycan biosynthesis. Functionally, cell wall formation. Catalyzes the transfer of a GlcNAc subunit on undecaprenyl-pyrophosphoryl-MurNAc-pentapeptide (lipid intermediate I) to form undecaprenyl-pyrophosphoryl-MurNAc-(pentapeptide)GlcNAc (lipid intermediate II). This is UDP-N-acetylglucosamine--N-acetylmuramyl-(pentapeptide) pyrophosphoryl-undecaprenol N-acetylglucosamine transferase from Symbiobacterium thermophilum (strain DSM 24528 / JCM 14929 / IAM 14863 / T).